The following is a 1413-amino-acid chain: Leucine-rich repeat receptor protein kinase MSL1 (1413 aa).

The signal sequence occupies residues 1 to 23 (MAPMLSIASRSPSPALIAPHASA). N-linked (GlcNAc...) asparagine glycosylation is found at asparagine 153 and asparagine 192. LRR repeat units follow at residues 185 to 209 (FQSL…MVNL), 210 to 233 (QHLQ…LFDL), 235 to 257 (MLKV…IAHL), 258 to 281 (QQLT…LGSL), 282 to 304 (KNLE…SFSN), 306 to 329 (SRLL…IRAL), 330 to 353 (VNLV…LCQL), 354 to 377 (KNLQ…IGNL), 379 to 401 (QLEV…IGNL), 402 to 425 (EILE…VGEL), 427 to 449 (NLRQ…LGNC), 450 to 473 (KKLT…LADL), 475 to 497 (AVVL…IQNW), 498 to 518 (SNVS…PGLP), 519 to 542 (LHLV…ICQG), 543 to 565 (TFLQ…TFKG), 567 to 589 (KNLT…YLAL), 590 to 613 (LPLV…LWES), 615 to 636 (TILD…SIGK), 637 to 661 (LLSL…IGAL), 662 to 685 (RNLT…LFNC), 687 to 709 (NLVT…ISHL), 710 to 733 (TKLN…LCVA), 745 to 769 (VQHI…INNC), 771 to 793 (ILVE…LAEL), 794 to 817 (RNIT…PVPL), 818 to 841 (ASLQ…IGNI), 843 to 866 (PQIT…LLCK), and 868 to 890 (SLNH…CHED). Residues asparagine 304 and asparagine 317 are each glycosylated (N-linked (GlcNAc...) asparagine). Residues asparagine 461, asparagine 496, and asparagine 499 are each glycosylated (N-linked (GlcNAc...) asparagine). N-linked (GlcNAc...) asparagine glycosylation is found at asparagine 554, asparagine 568, and asparagine 601. 2 N-linked (GlcNAc...) asparagine glycosylation sites follow: asparagine 663 and asparagine 697. The N-linked (GlcNAc...) asparagine glycan is linked to asparagine 768. N-linked (GlcNAc...) asparagine glycosylation is present at asparagine 795. N-linked (GlcNAc...) asparagine glycans are attached at residues asparagine 878, asparagine 901, asparagine 917, and asparagine 928. 2 LRR repeats span residues 918–942 (FTKL…IARV) and 944–966 (SLYY…ICGM). Asparagine 973 carries N-linked (GlcNAc...) asparagine glycosylation. Residues 1016–1036 (TICCIATAIVIVLVVILVVYL) traverse the membrane as a helical segment. The region spanning 1107–1401 (FDGMHVVGDG…IEAMEYGPLV (295 aa)) is the Protein kinase domain. ATP is bound by residues 1113–1121 (VGDGGFGTV) and lysine 1135. Aspartate 1234 serves as the catalytic Proton acceptor.

It belongs to the protein kinase superfamily. Ser/Thr protein kinase family. As to expression, expressed in roots, leaves, shoots and spikelets.

The protein localises to the cell membrane. It catalyses the reaction L-seryl-[protein] + ATP = O-phospho-L-seryl-[protein] + ADP + H(+). The enzyme catalyses L-threonyl-[protein] + ATP = O-phospho-L-threonyl-[protein] + ADP + H(+). Its function is as follows. Receptor-like kinase that may play a role male and female sporogenesis. The protein is Leucine-rich repeat receptor protein kinase MSL1 of Oryza sativa subsp. japonica (Rice).